We begin with the raw amino-acid sequence, 182 residues long: Large ribosomal subunit protein uL6 (182 aa).

Belongs to the universal ribosomal protein uL6 family. As to quaternary structure, part of the 50S ribosomal subunit.

This protein binds to the 23S rRNA, and is important in its secondary structure. It is located near the subunit interface in the base of the L7/L12 stalk, and near the tRNA binding site of the peptidyltransferase center. The chain is Large ribosomal subunit protein uL6 from Karelsulcia muelleri (strain GWSS) (Sulcia muelleri).